Reading from the N-terminus, the 465-residue chain is MDFLPLFHSLQGRLALVVGGGEVALRKARLLADAGARLRVVAPQIHIELRHLVEQGGGELLERDYQDGDQPGCVLIIAATDDEPLNAEVSRAANARGIPVNVVDAPALCSVIFPAIVDRSPLVVAVSSGGDAPVLARLIRAKLETWIPSTYGQLAGLASRFRHRVKELLPDLQQRRVFWENLFQGEIAERVLAGRPAEAERLLEEHLAGGLAHIATGEVYLVGAGPGDPDLLTFRALRLMQQADVVLYDRLVAPSILELCRRDAERLYVGKRRAEHAVPQDRINRLLVELASQGKRVLRLKGGDPFIFGRGGEEIDELAAHGIPFQVVPGITAASGCAAYAGIPLTHRDHAQSVRFVTGHLKDGTTDLPWQDLVAPGQTLVFYMGLVGLPVICEQLVAHGRSAQTPAALIQQGTTAQQRVFTGTLENLPQLVAEHEVHAPTLVIVGEVVQLRDKLAWFEGAREDA.

The segment at 1 to 203 (MDFLPLFHSL…GRPAEAERLL (203 aa)) is precorrin-2 dehydrogenase /sirohydrochlorin ferrochelatase. Residues 22-23 (EV) and 43-44 (PQ) each bind NAD(+). A Phosphoserine modification is found at serine 128. Residues 217–465 (GEVYLVGAGP…AWFEGAREDA (249 aa)) are uroporphyrinogen-III C-methyltransferase. Proline 226 contributes to the S-adenosyl-L-methionine binding site. The active-site Proton acceptor is the aspartate 249. The active-site Proton donor is the lysine 271. S-adenosyl-L-methionine-binding positions include 302 to 304 (GGD), isoleucine 307, 332 to 333 (TA), methionine 384, and glycine 413.

It in the N-terminal section; belongs to the precorrin-2 dehydrogenase / sirohydrochlorin ferrochelatase family. The protein in the C-terminal section; belongs to the precorrin methyltransferase family.

The enzyme catalyses uroporphyrinogen III + 2 S-adenosyl-L-methionine = precorrin-2 + 2 S-adenosyl-L-homocysteine + H(+). The catalysed reaction is precorrin-2 + NAD(+) = sirohydrochlorin + NADH + 2 H(+). It carries out the reaction siroheme + 2 H(+) = sirohydrochlorin + Fe(2+). Its pathway is cofactor biosynthesis; adenosylcobalamin biosynthesis; precorrin-2 from uroporphyrinogen III: step 1/1. It functions in the pathway cofactor biosynthesis; adenosylcobalamin biosynthesis; sirohydrochlorin from precorrin-2: step 1/1. The protein operates within porphyrin-containing compound metabolism; siroheme biosynthesis; precorrin-2 from uroporphyrinogen III: step 1/1. It participates in porphyrin-containing compound metabolism; siroheme biosynthesis; siroheme from sirohydrochlorin: step 1/1. Its pathway is porphyrin-containing compound metabolism; siroheme biosynthesis; sirohydrochlorin from precorrin-2: step 1/1. Multifunctional enzyme that catalyzes the SAM-dependent methylations of uroporphyrinogen III at position C-2 and C-7 to form precorrin-2 via precorrin-1. Then it catalyzes the NAD-dependent ring dehydrogenation of precorrin-2 to yield sirohydrochlorin. Finally, it catalyzes the ferrochelation of sirohydrochlorin to yield siroheme. This is Siroheme synthase from Pseudomonas aeruginosa (strain LESB58).